Consider the following 535-residue polypeptide: Nuclear/nucleolar GTPase 2 (535 aa).

The tract at residues 1–42 (MAKKKERAVNVSGKPRHSLDVNRANDKKGAGGGAGGGGGGRS) is disordered. A compositionally biased stretch (basic and acidic residues) spans 17-29 (HSLDVNRANDKKG). Residues 30 to 41 (AGGGAGGGGGGR) are compositionally biased toward gly residues. The region spanning 213–374 (WGELYKVIDS…LIDCPGVVYQ (162 aa)) is the CP-type G domain. The G4 stretch occupies residues 261–264 (NKCD). Residues 290–292 (SIN) form a G5 region. Residues 323–330 (GYPNVGKS) are G1. The segment at 349 to 353 (GETKV) is G2. A G3 region spans residues 367–370 (DCPG). A disordered region spans residues 464 to 494 (FFVPPPQQGEDSPSETAEPVEKSDEEGVSSD).

This sequence belongs to the TRAFAC class YlqF/YawG GTPase family. RsgA subfamily. Interacts (via N-terminus) with the 60S ribosomal proteins RPL10A. This interaction is enhanced by the addition of GTP. Expressed in roots, shoot apical meristem, leaves, leaf sheaths and flowers.

The protein resides in the nucleus. Its subcellular location is the nucleolus. The GTPase activity is stimulated in the presence of ribosomes, particularly of the 60S subunit. GTPase involved in pre-60S ribosomal subunit maturation. This chain is Nuclear/nucleolar GTPase 2, found in Oryza sativa subsp. japonica (Rice).